A 109-amino-acid chain; its full sequence is Fluoride-specific ion channel FluC 1 (109 aa).

Transmembrane regions (helical) follow at residues 21–41 (FYFKNNFVISIIGSFLYGFFI), 52–72 (ILFSGFFACFTSFSGFVHFLY), and 83–103 (LFIYLNVIVILNLIIMYIGFQ).

This sequence belongs to the fluoride channel Fluc/FEX (TC 1.A.43) family.

The protein localises to the cell inner membrane. The catalysed reaction is fluoride(in) = fluoride(out). In terms of biological role, fluoride-specific ion channel. Important for reducing fluoride concentration in the cell, thus reducing its toxicity. The protein is Fluoride-specific ion channel FluC 1 of Prochlorococcus marinus subsp. pastoris (strain CCMP1986 / NIES-2087 / MED4).